A 444-amino-acid polypeptide reads, in one-letter code: Multidrug resistance protein MdtA (444 aa).

An N-terminal signal peptide occupies residues 1–20 (MKSQSKRTSRLFVFVGVVVA). Residues 37–52 (NNTSGAQQSARGQDTS) are compositionally biased toward polar residues. Disordered stretches follow at residues 37-60 (NNTS…RNTP) and 399-444 (PRSA…AEKS). Positions 409–419 (ASAEKAAAEAE) are enriched in low complexity. The span at 435–444 (ARSTTAAEKS) shows a compositional bias: polar residues.

Belongs to the membrane fusion protein (MFP) (TC 8.A.1) family. Part of a tripartite efflux system composed of MdtA, MdtB and MdtC.

The protein resides in the cell inner membrane. The polypeptide is Multidrug resistance protein MdtA (Yersinia pseudotuberculosis serotype I (strain IP32953)).